The sequence spans 105 residues: ATP synthase subunit c (105 aa).

The next 2 membrane-spanning stretches (helical) occupy residues 37–57 and 82–102; these read IGAG…GYIF and SAIS…LIFV.

The protein belongs to the ATPase C chain family. F-type ATPases have 2 components, F(1) - the catalytic core - and F(0) - the membrane proton channel. F(1) has five subunits: alpha(3), beta(3), gamma(1), delta(1), epsilon(1). F(0) has three main subunits: a(1), b(2) and c(10-14). The alpha and beta chains form an alternating ring which encloses part of the gamma chain. F(1) is attached to F(0) by a central stalk formed by the gamma and epsilon chains, while a peripheral stalk is formed by the delta and b chains.

The protein resides in the cell membrane. Its function is as follows. F(1)F(0) ATP synthase produces ATP from ADP in the presence of a proton or sodium gradient. F-type ATPases consist of two structural domains, F(1) containing the extramembraneous catalytic core and F(0) containing the membrane proton channel, linked together by a central stalk and a peripheral stalk. During catalysis, ATP synthesis in the catalytic domain of F(1) is coupled via a rotary mechanism of the central stalk subunits to proton translocation. In terms of biological role, key component of the F(0) channel; it plays a direct role in translocation across the membrane. A homomeric c-ring of between 10-14 subunits forms the central stalk rotor element with the F(1) delta and epsilon subunits. This is ATP synthase subunit c from Mycoplasma pneumoniae (strain ATCC 29342 / M129 / Subtype 1) (Mycoplasmoides pneumoniae).